A 142-amino-acid chain; its full sequence is MSASSPLSPTAGGPFAAWYAAFGDWARTDGAAWLYLFKALLAAFIALGVSMRLDLPAPKTAMTTVFIVMQRKAAPCSRKASTGSPARSSGSSRRSRSSGCSRSSRSCSCWRSPCGSRCAPPAPRATATSAVTASCSPAIRPR.

The segment at 73 to 142 is disordered; that stretch reads AAPCSRKAST…ASCSPAIRPR (70 aa). Over residues 81 to 142 the composition is skewed to low complexity; it reads STGSPARSSG…ASCSPAIRPR (62 aa).

Its function is as follows. Involved in the resistance (detoxification) of the fungal toxin fusaric acid. The polypeptide is Fusaric acid resistance protein FusB (fusB) (Burkholderia cepacia (Pseudomonas cepacia)).